Reading from the N-terminus, the 462-residue chain is Cysteine--tRNA ligase (462 aa).

Cysteine 29 serves as a coordination point for Zn(2+). The 'HIGH' region signature appears at 31-41 (PTVYNHAHIGN). Residues cysteine 211, histidine 236, and glutamate 240 each contribute to the Zn(2+) site. A 'KMSKS' region motif is present at residues 269 to 273 (KMSKS). Lysine 272 serves as a coordination point for ATP.

This sequence belongs to the class-I aminoacyl-tRNA synthetase family. As to quaternary structure, monomer. It depends on Zn(2+) as a cofactor.

The protein localises to the cytoplasm. It catalyses the reaction tRNA(Cys) + L-cysteine + ATP = L-cysteinyl-tRNA(Cys) + AMP + diphosphate. In Caulobacter sp. (strain K31), this protein is Cysteine--tRNA ligase.